Here is a 226-residue protein sequence, read N- to C-terminus: Small ribosomal subunit protein uS3 (226 aa).

One can recognise a KH type-2 domain in the interval 39 to 107; it reads IRAYIKKNVV…EVTLNIKEVK (69 aa).

It belongs to the universal ribosomal protein uS3 family. Part of the 30S ribosomal subunit. Forms a tight complex with proteins S10 and S14.

In terms of biological role, binds the lower part of the 30S subunit head. Binds mRNA in the 70S ribosome, positioning it for translation. The chain is Small ribosomal subunit protein uS3 from Pelagibacter ubique (strain HTCC1062).